The following is an 805-amino-acid chain: Transmembrane channel-like protein 6 (805 aa).

Residues 1-29 (MAQPLAFILDVPETPGDQGQGPSPYDESE) are disordered. Topologically, residues 1 to 209 (MAQPLAFILD…SCCGRLRYAC (209 aa)) are lumenal. Position 89 is a phosphothreonine (threonine 89). Position 94 is an omega-N-methylarginine (arginine 94). The N-linked (GlcNAc...) asparagine glycan is linked to asparagine 103. Residue threonine 105 is modified to Phosphothreonine. Residues 210–230 (VLALHSLGLALLSALQALMPW) traverse the membrane as a helical segment. Residues 231–249 (RYALKRIGGQFGSSVLSYF) are Cytoplasmic-facing. The helical transmembrane segment at 250–270 (LFLKTLLAFNALLLLLLVAFI) threads the bilayer. At 271–338 (MGPQVAFPPA…TPRVGGLPYN (68 aa)) the chain is on the lumenal side. Residue asparagine 312 is glycosylated (N-linked (GlcNAc...) asparagine). A helical transmembrane segment spans residues 339–359 (MPLAYLSTVGVSFFITCITLV). Over 360–431 (YSMAHSFGES…RSVCGRLRQA (72 aa)) the chain is Cytoplasmic. The helical transmembrane segment at 432 to 452 (AVLGLVWLLCLGTALGCAVAV) threads the bilayer. At 453–469 (HVFSEFMIQSPEAAGQE) the chain is on the lumenal side. Residues 470–490 (AVLLVLPLVVGLLNLGAPYLC) form a helical membrane-spanning segment. Residues 491-505 (RVLAALEPHDSPVLE) lie on the Cytoplasmic side of the membrane. The helical transmembrane segment at 506–526 (VYVAICRNLILKLAILGTLCY) threads the bilayer. At 527-553 (HWLGRRVGVLQGQCWEDFVGQELYRFL) the chain is on the lumenal side. The chain crosses the membrane as a helical span at residues 554-574 (VMDFVLMLLDTLFGELVWRII). Topologically, residues 575–604 (SEKKLKRRRKPEFDIARNVLELIYGQTLTW) are cytoplasmic. The helical transmembrane segment at 605–625 (LGVLFSPLLPAVQIIKLLLVF) threads the bilayer. At 626 to 650 (YVKKTSLLANCQAPRRPWLASHMST) the chain is on the lumenal side. A helical transmembrane segment spans residues 651-671 (VFLTLLCFPAFLGAAVFLCYA). Over 672 to 722 (VWQVKPSSTCGPFRTLDTMYEAGRVWVRHLEAAGPRVSWLPWVHRYLMENT) the chain is Cytoplasmic. Residues 723-743 (FFVFLVSALLLAVIYLNIQVV) traverse the membrane as a helical segment. At 744–805 (RGQRKVICLL…PALLTDEQDA (62 aa)) the chain is on the lumenal side. The tract at residues 778–805 (KEREERSRVGTTEEAAAPPALLTDEQDA) is disordered.

The protein belongs to the TMC family. Interacts with TMC8. Interacts and forms a complex with TMC8 and CIB1; the interaction stabilizes each component of the complex. Interacts and forms a complex with TMC8 and SLC30A1/ZNT1; the interaction regulates zinc transport into the ER. As to quaternary structure, (Microbial infection) Interacts with human papillomavirus 16/HPV16 protein E5; the interaction alleviates TMC6-mediated transcription factors inhibition. As to expression, expressed in placenta, prostate, testis, activated T-lymphocytes and lymphokine-activated killer (LAK) lymphocytes.

The protein resides in the endoplasmic reticulum membrane. The protein localises to the golgi apparatus membrane. Its subcellular location is the nucleus membrane. Functionally, acts as a regulatory protein involved in the regulation of numerous cellular processes. Together with its homolog TMC8/EVER2, forms a complex with CIB1 in lymphocytes and keratynocytes where TMC6 and TMC8 stabilize CIB1 and reciprocally. Together with TMC8, also forms a complex with and activates zinc transporter ZNT1 at the ER membrane of keratynocytes, thereby facilitating zinc uptake into the ER. Down-regulates the activity of transcription factors induced by zinc and cytokines. Also plays a role in thermal sensation by inhibiting the M-channel (KCNQ2-KCNQ3 channel) current in primary sensory neurons. This is Transmembrane channel-like protein 6 from Homo sapiens (Human).